Reading from the N-terminus, the 137-residue chain is Peptide methionine sulfoxide reductase MsrB (137 aa).

Residues 7–129 enclose the MsrB domain; sequence PGELKNGLSE…NSASLSFTDE (123 aa). Residues cysteine 46, cysteine 49, cysteine 95, and cysteine 98 each coordinate Zn(2+). Cysteine 118 (nucleophile) is an active-site residue.

This sequence belongs to the MsrB Met sulfoxide reductase family. Requires Zn(2+) as cofactor.

It catalyses the reaction L-methionyl-[protein] + [thioredoxin]-disulfide + H2O = L-methionyl-(R)-S-oxide-[protein] + [thioredoxin]-dithiol. The chain is Peptide methionine sulfoxide reductase MsrB from Klebsiella pneumoniae (strain 342).